The primary structure comprises 302 residues: 33 kDa chaperonin (302 aa).

2 disulfides stabilise this stretch: C234–C236 and C267–C270.

It belongs to the HSP33 family. In terms of processing, under oxidizing conditions two disulfide bonds are formed involving the reactive cysteines. Under reducing conditions zinc is bound to the reactive cysteines and the protein is inactive.

Its subcellular location is the cytoplasm. Functionally, redox regulated molecular chaperone. Protects both thermally unfolding and oxidatively damaged proteins from irreversible aggregation. Plays an important role in the bacterial defense system toward oxidative stress. The sequence is that of 33 kDa chaperonin from Neisseria meningitidis serogroup A / serotype 4A (strain DSM 15465 / Z2491).